Reading from the N-terminus, the 752-residue chain is Multifunctional tryptophan biosynthesis protein (752 aa).

Positions 3–202 constitute a Glutamine amidotransferase type-1 domain; that stretch reads FTLLIDNYDS…IQMKGGKWGG (200 aa). Residue 58-60 coordinates L-glutamine; that stretch reads GPG. Cys-86 acts as the Nucleophile; for GATase activity in catalysis. L-glutamine is bound at residue 136-137; sequence SL. Active-site for GATase activity residues include His-176 and Glu-178. An indole-3-glycerol phosphate synthase region spans residues 231–495; that stretch reads ILNRIHAQRL…DTKAFLRSLI (265 aa). The interval 509–752 is N-(5'-phosphoribosyl)anthranilate isomerase; it reads LVKICGIRST…VEAFVKAVRG (244 aa).

The enzyme catalyses N-(5-phospho-beta-D-ribosyl)anthranilate = 1-(2-carboxyphenylamino)-1-deoxy-D-ribulose 5-phosphate. It carries out the reaction 1-(2-carboxyphenylamino)-1-deoxy-D-ribulose 5-phosphate + H(+) = (1S,2R)-1-C-(indol-3-yl)glycerol 3-phosphate + CO2 + H2O. It catalyses the reaction chorismate + L-glutamine = anthranilate + pyruvate + L-glutamate + H(+). Its pathway is amino-acid biosynthesis; L-tryptophan biosynthesis; L-tryptophan from chorismate: step 1/5. The protein operates within amino-acid biosynthesis; L-tryptophan biosynthesis; L-tryptophan from chorismate: step 3/5. It participates in amino-acid biosynthesis; L-tryptophan biosynthesis; L-tryptophan from chorismate: step 4/5. Trifunctional enzyme bearing the Gln amidotransferase (GATase) domain of anthranilate synthase, indole-glycerolphosphate synthase, and phosphoribosylanthranilate isomerase activities. In Cryptococcus neoformans var. neoformans serotype D (strain B-3501A) (Filobasidiella neoformans), this protein is Multifunctional tryptophan biosynthesis protein (TRP1).